Reading from the N-terminus, the 148-residue chain is SsrA-binding protein (148 aa).

A disordered region spans residues 119–148 (AKGKKQHDKRQSMKEADWKREKQRLIKHTR). The segment covering 127–142 (KRQSMKEADWKREKQR) has biased composition (basic and acidic residues).

This sequence belongs to the SmpB family.

It is found in the cytoplasm. Functionally, required for rescue of stalled ribosomes mediated by trans-translation. Binds to transfer-messenger RNA (tmRNA), required for stable association of tmRNA with ribosomes. tmRNA and SmpB together mimic tRNA shape, replacing the anticodon stem-loop with SmpB. tmRNA is encoded by the ssrA gene; the 2 termini fold to resemble tRNA(Ala) and it encodes a 'tag peptide', a short internal open reading frame. During trans-translation Ala-aminoacylated tmRNA acts like a tRNA, entering the A-site of stalled ribosomes, displacing the stalled mRNA. The ribosome then switches to translate the ORF on the tmRNA; the nascent peptide is terminated with the 'tag peptide' encoded by the tmRNA and targeted for degradation. The ribosome is freed to recommence translation, which seems to be the essential function of trans-translation. This is SsrA-binding protein from Neisseria gonorrhoeae (strain ATCC 700825 / FA 1090).